A 157-amino-acid chain; its full sequence is uncharacterized protein (157 aa).

The disordered stretch occupies residues 1-157 (MNRGPPLRSR…SFSFLVPSNS (157 aa)). The segment covering 8 to 31 (RSRPPSSPPPASAFPGPSPFPSPS) has biased composition (pro residues). The segment covering 62-71 (RTSHPPRCPH) has biased composition (basic residues). The segment covering 76–95 (PSAPSPPFTPPHPLPTPTPS) has biased composition (pro residues). Composition is skewed to low complexity over residues 96 to 117 (SSPRSPWLSLAPLPTSSASLAS) and 124 to 157 (SFSSPSSPSTSPLSPSSSSFPSSSSFSFLVPSNS).

This is an uncharacterized protein from Vitis vinifera (Grape).